Reading from the N-terminus, the 210-residue chain is Small ribosomal subunit protein uS7 (210 aa).

The span at 1 to 22 shows a compositional bias: acidic residues; sequence MSDEQPAEDETEEAAAESEDTQ. The tract at residues 1-23 is disordered; sequence MSDEQPAEDETEEAAAESEDTQE.

The protein belongs to the universal ribosomal protein uS7 family. In terms of assembly, part of the 30S ribosomal subunit. Contacts proteins S9 and S11.

One of the primary rRNA binding proteins, it binds directly to 16S rRNA where it nucleates assembly of the head domain of the 30S subunit. Is located at the subunit interface close to the decoding center. The protein is Small ribosomal subunit protein uS7 of Halobacterium salinarum (strain ATCC 29341 / DSM 671 / R1).